Reading from the N-terminus, the 1265-residue chain is Protein transport protein SEC31 (1265 aa).

7 WD repeats span residues 6-46 (EIAR…ELWD), 61-105 (TVDN…KTKD), 116-156 (KHTG…EPFA), 162-202 (TPMD…EVLH), 209-252 (GGRA…APEK), 256-296 (GHKK…KLGE), and 299-339 (TTAN…PSVS). A WD 8; interaction with SEC13 repeat occupies 380 to 403 (SFGFGSKLVIINTDSSGKSTVKVD). A compositionally biased stretch (basic and acidic residues) spans 457 to 480 (KESLFEDANNDEKEATSPETKKEN). Disordered regions lie at residues 457 to 485 (KESLFEDANNDEKEATSPETKKENGEDDF), 765 to 784 (VKSSANAKIAKPASSSGQTR), and 793 to 1163 (PAYA…IPEN). The segment covering 794 to 810 (AYAPPVQAPPVQAPQPP) has biased composition (pro residues). Low complexity-rich tracts occupy residues 811–824 (LVQQQQQQQQQQQP), 865–875 (TPSSLSGTTSG), 901–931 (AKTAAPRRAAAAATPPVSTPTPVSAPAFGSP), 939–951 (SQPGSVGSVSSAG), and 969–987 (SISRSTSRTTVPTSSTVPA). The segment covering 1004–1023 (SDASQPPSSGFASPTLNSSP) has biased composition (polar residues). Composition is skewed to pro residues over residues 1062 to 1071 (YAPPKNPYAV) and 1083 to 1101 (APPPPAPKLGSAAPPPPQP).

This sequence belongs to the WD repeat SEC31 family. The COPII coat is composed of at least 5 proteins: the SEC23/24 complex, the SEC13/31 complex, and the protein SAR1. SEC13 and SEC31 make a 2:2 tetramer that forms the edge element of the COPII outer coat. The tetramer self-assembles in multiple copies to form the complete polyhedral cage. Interacts (via WD 8) with SEC13.

Its subcellular location is the cytoplasmic vesicle. The protein localises to the COPII-coated vesicle membrane. The protein resides in the endoplasmic reticulum membrane. In terms of biological role, component of the coat protein complex II (COPII) which promotes the formation of transport vesicles from the endoplasmic reticulum (ER). The coat has two main functions, the physical deformation of the endoplasmic reticulum membrane into vesicles and the selection of cargo molecules. The protein is Protein transport protein SEC31 (PGA63) of Candida albicans (strain SC5314 / ATCC MYA-2876) (Yeast).